The chain runs to 273 residues: 4-hydroxy-tetrahydrodipicolinate reductase (273 aa).

NAD(+) is bound by residues Gly11–Met16 and Gly106–Thr108. Catalysis depends on His162, which acts as the Proton donor/acceptor. His163 contacts (S)-2,3,4,5-tetrahydrodipicolinate. The active-site Proton donor is Lys166. Residue Gly172–Thr173 coordinates (S)-2,3,4,5-tetrahydrodipicolinate.

Belongs to the DapB family.

The protein localises to the cytoplasm. It carries out the reaction (S)-2,3,4,5-tetrahydrodipicolinate + NAD(+) + H2O = (2S,4S)-4-hydroxy-2,3,4,5-tetrahydrodipicolinate + NADH + H(+). It catalyses the reaction (S)-2,3,4,5-tetrahydrodipicolinate + NADP(+) + H2O = (2S,4S)-4-hydroxy-2,3,4,5-tetrahydrodipicolinate + NADPH + H(+). It participates in amino-acid biosynthesis; L-lysine biosynthesis via DAP pathway; (S)-tetrahydrodipicolinate from L-aspartate: step 4/4. Its function is as follows. Catalyzes the conversion of 4-hydroxy-tetrahydrodipicolinate (HTPA) to tetrahydrodipicolinate. The polypeptide is 4-hydroxy-tetrahydrodipicolinate reductase (Synechococcus sp. (strain RCC307)).